A 602-amino-acid polypeptide reads, in one-letter code: MASVEGDDDFGSSSSRSYQDQLYTELWKVCAGPLVEVPRAQERVFYFPQGHMEQLVASTNQGINSEEIPVFDLPPKILCRVLDVTLKAEHETDEVYAQITLQPEEDQSEPTSLDPPIVGPTKQEFHSFVKILTASDTSTHGGFSVLRKHATECLPSLDMTQATPTQELVTRDLHGFEWRFKHIFRGQPRRHLLTTGWSTFVSSKRLVAGDAFVFLRGENGDLRVGVRRLARHQSTMPTSVISSQSMHLGVLATASHAVRTTTIFVVFYKPRISQFIVGVNKYMEAIKHGFSLGTRFRMRFEGEESPERIFTGTIVGSGDLSSQWPASKWRSLQVQWDEPTTVQRPDKVSPWEIEPFLATSPISTPAQQPQSKCKRSRPIEPSVKTPAPPSFLYSLPQSQDSINASLKLFQDPSLERISGGYSSNNSFKPETPPPPTNCSYRLFGFDLTSNSPAPIPQDKQPMDTCGAAKCQEPITPTSMSEQKKQQTSRSRTKVQMQGIAVGRAVDLTLLKSYDELIDELEEMFEIQGQLLARDKWIVVFTDDEGDMMLAGDDPWNEFCKMAKKIFIYSSDEVKKMTTKLKISSSLENEEYGNESFENRSRG.

Residues 128–230 constitute a DNA-binding region (TF-B3); that stretch reads FVKILTASDT…DLRVGVRRLA (103 aa). The disordered stretch occupies residues 359 to 396; that stretch reads TSPISTPAQQPQSKCKRSRPIEPSVKTPAPPSFLYSLP. Residues 360–371 show a composition bias toward polar residues; it reads SPISTPAQQPQS. The PB1 domain maps to 489–581; sequence RSRTKVQMQG…EVKKMTTKLK (93 aa).

The protein belongs to the ARF family. Homodimers and heterodimers.

The protein resides in the nucleus. Auxin response factors (ARFs) are transcriptional factors that bind specifically to the DNA sequence 5'-TGTCTC-3' found in the auxin-responsive promoter elements (AuxREs). Could act as transcriptional activator or repressor. Formation of heterodimers with Aux/IAA proteins may alter their ability to modulate early auxin response genes expression. The protein is Auxin response factor 18 (ARF18) of Arabidopsis thaliana (Mouse-ear cress).